The following is a 240-amino-acid chain: MIVFIVLPILAAVLQQSSGNVDFDSESPRKPEIQNEIVDLHNSLRRSVNPTASNMLKMEWYPEAAANAERWAYRCIEDHSSPDSRVLEGIKCGENIYMSPIPMKWTDIIHIWHDEYKNFKYGIGADPPNAVSGHFTQIVWYKSYRAGCAAAYCPSSEYSYFYVCQYCPAGNMRGKTATPYTSGPPCGDCPSACDNGLCTNPCTQEDVFTNCNSLVQQSNCQHNYIKTNCPASCFCHNEIK.

A signal peptide spans 1–19 (MIVFIVLPILAAVLQQSSG). Positions 38–166 (VDLHNSLRRS…EYSYFYVCQY (129 aa)) constitute an SCP domain. 8 disulfide bridges follow: cysteine 75-cysteine 153, cysteine 92-cysteine 167, cysteine 148-cysteine 164, cysteine 186-cysteine 193, cysteine 189-cysteine 198, cysteine 202-cysteine 235, cysteine 211-cysteine 229, and cysteine 220-cysteine 233. Residues 202–235 (CTQEDVFTNCNSLVQQSNCQHNYIKTNCPASCFC) enclose the ShKT domain.

It belongs to the CRISP family. Expressed by the venom gland.

It is found in the secreted. Blocks contraction of smooth muscle elicited by high potassium-induced depolarization, but does not block caffeine-stimulated contraction. Since high potassium-treatment activates voltage-gated channels and caffeine exposure activates ryanodine receptors, this toxin may target L-type voltage-gated calcium channels (Cav) (and not ryanodine receptors) on smooth muscle. This toxin also shows a little inhibition on cyclic nucleotide-gated CNGA1 channel. The chain is Cysteine-rich venom protein ablomin from Gloydius blomhoffii (Mamushi).